The sequence spans 309 residues: RHOMBOID-like protein 5 (309 aa).

7 consecutive transmembrane segments (helical) span residues 27–47, 113–133, 140–160, 170–190, 200–220, 222–242, and 274–294; these read IPVPWVAWLVPLILAANFVTF, IWLHGGFLHLMANMISLMCIG, FGFMRIGALYVISGLGGSLVS, VSVGASGALFGLLGAMLSELI, CTALMTLILIIVLNLSVGFLP, VDNSAHFGGFLAGFFLGFVLL, and IFRFTSLAILLAGFIAGYTKL. Ser175 acts as the Nucleophile in catalysis. His227 functions as the Charge relay system in the catalytic mechanism.

Belongs to the peptidase S54 family.

The protein localises to the membrane. It carries out the reaction Cleaves type-1 transmembrane domains using a catalytic dyad composed of serine and histidine that are contributed by different transmembrane domains.. Functionally, probable rhomboid-type serine protease that catalyzes intramembrane proteolysis. May function in reproductive organs maturation. This Arabidopsis thaliana (Mouse-ear cress) protein is RHOMBOID-like protein 5.